The chain runs to 348 residues: D-alanine--D-alanine ligase (348 aa).

Positions 132 to 334 constitute an ATP-grasp domain; that stretch reads KRILEVAGVP…YSDLIKELVV (203 aa). 162–217 contacts ATP; sequence LEKLTFPVFVKPANMGSSVGISKAENESELRSAIDLALKYDSRILIEQGVVAREIE. Mg(2+) is bound by residues D288, E301, and N303.

It belongs to the D-alanine--D-alanine ligase family. Requires Mg(2+) as cofactor. Mn(2+) is required as a cofactor.

The protein localises to the cytoplasm. The catalysed reaction is 2 D-alanine + ATP = D-alanyl-D-alanine + ADP + phosphate + H(+). It functions in the pathway cell wall biogenesis; peptidoglycan biosynthesis. Functionally, cell wall formation. The chain is D-alanine--D-alanine ligase from Streptococcus thermophilus (strain ATCC BAA-250 / LMG 18311).